A 741-amino-acid chain; its full sequence is Photosystem I P700 chlorophyll a apoprotein A2 1 (741 aa).

8 helical membrane passes run 46 to 69 (IFAT…FHVA), 135 to 158 (LYTG…LHLQ), 175 to 199 (LNHH…HVAI), 273 to 291 (MAHH…GHMY), 334 to 357 (LHFQ…QHMY), 373 to 399 (AALY…IFLV), 421 to 443 (AIIS…LYVH), and 524 to 542 (FLVH…LILV). [4Fe-4S] cluster contacts are provided by cysteine 566 and cysteine 575. Helical transmembrane passes span 582-603 (SFYL…YWHW) and 650-672 (LSVW…MFLI). Positions 661, 669, and 677 each coordinate chlorophyll a. Tryptophan 678 serves as a coordination point for phylloquinone. A helical membrane pass occupies residues 714–734 (VVGLAHFTVGYVLTYAAFLIA).

This sequence belongs to the PsaA/PsaB family. In terms of assembly, the PsaA/B heterodimer binds the P700 chlorophyll special pair and subsequent electron acceptors. PSI consists of a core antenna complex that captures photons, and an electron transfer chain that converts photonic excitation into a charge separation. The cyanobacterial PSI reaction center is composed of one copy each of PsaA,B,C,D,E,F,I,J,K,L,M and X, and forms trimeric complexes. The cofactor is PSI electron transfer chain: 5 chlorophyll a, 1 chlorophyll a', 2 phylloquinones and 3 4Fe-4S clusters. PSI core antenna: 90 chlorophyll a, 22 carotenoids, 3 phospholipids and 1 galactolipid. P700 is a chlorophyll a/chlorophyll a' dimer, A0 is one or more chlorophyll a, A1 is one or both phylloquinones and FX is a shared 4Fe-4S iron-sulfur center..

It localises to the cellular thylakoid membrane. The enzyme catalyses reduced [plastocyanin] + hnu + oxidized [2Fe-2S]-[ferredoxin] = oxidized [plastocyanin] + reduced [2Fe-2S]-[ferredoxin]. In terms of biological role, psaA and PsaB bind P700, the primary electron donor of photosystem I (PSI), as well as the electron acceptors A0, A1 and FX. PSI is a plastocyanin/cytochrome c6-ferredoxin oxidoreductase, converting photonic excitation into a charge separation, which transfers an electron from the donor P700 chlorophyll pair to the spectroscopically characterized acceptors A0, A1, FX, FA and FB in turn. Oxidized P700 is reduced on the lumenal side of the thylakoid membrane by plastocyanin or cytochrome c6. The sequence is that of Photosystem I P700 chlorophyll a apoprotein A2 1 (psaB1) from Nostoc sp. (strain PCC 7120 / SAG 25.82 / UTEX 2576).